The primary structure comprises 65 residues: Large ribosomal subunit protein bL35 (65 aa).

This sequence belongs to the bacterial ribosomal protein bL35 family.

This chain is Large ribosomal subunit protein bL35, found in Syntrophobacter fumaroxidans (strain DSM 10017 / MPOB).